A 95-amino-acid chain; its full sequence is Antitoxin TacA1 (95 aa).

The tract at residues 59-95 (FNFNDEQYEEFINLLDAPVADDPVIEKLLARKPQWDV) is neutralization domain.

It belongs to the TacA antitoxin family. In terms of assembly, homodimer. Forms a complex with cognate toxin TacT1. Forms a 4:2 antitoxin:toxin complex with cognate toxin TacT1.

Its function is as follows. Antitoxin component of a type II toxin-antitoxin (TA) system. Counteracts the toxic effect of cognate toxin TacT1 (T8), but not TacT2 or TacT3. Plays a role in persister cell formation. The TacA1-TacT1 complex binds (and probably represses) its own promoter DNA but not that of tacA3-tacT3, it does not repress the tacA3-tacT3 promoter. This chain is Antitoxin TacA1, found in Salmonella typhimurium (strain 14028s / SGSC 2262).